The sequence spans 673 residues: ATP-dependent DNA helicase Rep (673 aa).

Residues 1–280 (MRLNPGQQQA…IKLEQNYRSS (280 aa)) form the UvrD-like helicase ATP-binding domain. Residues 22-29 (AGAGSGKT) and arginine 278 each bind ATP. The region spanning 281 to 562 (GRILKAANIL…QLMTLHASKG (282 aa)) is the UvrD-like helicase C-terminal domain.

This sequence belongs to the helicase family. UvrD subfamily. Homodimer in association with DNA.

It catalyses the reaction Couples ATP hydrolysis with the unwinding of duplex DNA by translocating in the 3'-5' direction.. The enzyme catalyses ATP + H2O = ADP + phosphate + H(+). Binding to DNA induces dimerization, which is required for DNA helicase activity. Helicase activity is stimulated by PriC. Its function is as follows. Rep helicase is a single-stranded (ss)DNA-dependent ATPase involved in DNA replication; it can initiate unwinding at a nick in the DNA. It binds to ssDNA and acts in a progressive fashion along the DNA in the 3' to 5' direction. Binds double-stranded (ds)DNA with a 5' ss- but not 3' ss-extension and forked structures with either lagging or leading ssDNA. Part of the PriC-Rep pathway for restart of stalled replication forks, which reloads the DnaB replicative helicase on sites other than the origin of replication. The chain is ATP-dependent DNA helicase Rep from Escherichia coli (strain K12).